An 88-amino-acid polypeptide reads, in one-letter code: Class I hydrophobin F (88 aa).

An N-terminal signal peptide occupies residues 1-21; it reads MLSRLFTVPAILLATLGSAAT. Intrachain disulfides connect cysteine 30/cysteine 67, cysteine 34/cysteine 58, cysteine 35/cysteine 51, and cysteine 68/cysteine 84.

It belongs to the fungal hydrophobin family.

The protein resides in the secreted. Its subcellular location is the cell wall. The protein localises to the vacuole. It localises to the cytoplasmic vesicle. Its function is as follows. Aerial growth, conidiation, and dispersal of filamentous fungi in the environment rely upon a capability of their secreting small amphipathic proteins called hydrophobins (HPBs) with low sequence identity. Class I can self-assemble into an outermost layer of rodlet bundles on aerial cell surfaces, conferring cellular hydrophobicity that supports fungal growth, development and dispersal; whereas Class II form highly ordered films at water-air interfaces through intermolecular interactions but contribute nothing to the rodlet structure. Hyd1F contributes to certain cell wall-related features, such as hydrophobicity but is not involved in cell wall-related events during fungal proliferation in host hemocoel. Does not contribute to conidial hydrophobicity. In Beauveria bassiana (strain ARSEF 2860) (White muscardine disease fungus), this protein is Class I hydrophobin F.